The primary structure comprises 186 residues: Ribosome-recycling factor (186 aa).

Belongs to the RRF family.

The protein localises to the cytoplasm. Responsible for the release of ribosomes from messenger RNA at the termination of protein biosynthesis. May increase the efficiency of translation by recycling ribosomes from one round of translation to another. This chain is Ribosome-recycling factor, found in Polaromonas naphthalenivorans (strain CJ2).